The sequence spans 391 residues: Formate-dependent phosphoribosylglycinamide formyltransferase (391 aa).

N(1)-(5-phospho-beta-D-ribosyl)glycinamide contacts are provided by residues 18–19 and E78; that span reads EL. ATP is bound by residues R110, K151, 156–161, 191–194, and E199; these read SSGKGQ and EEFI. One can recognise an ATP-grasp domain in the interval 115-305; sequence ELAHEELGIR…EFELHLRAIL (191 aa). E264 and E276 together coordinate Mg(2+). Residues D283, K353, and 360–361 contribute to the N(1)-(5-phospho-beta-D-ribosyl)glycinamide site; that span reads RR.

Belongs to the PurK/PurT family. Homodimer.

The catalysed reaction is N(1)-(5-phospho-beta-D-ribosyl)glycinamide + formate + ATP = N(2)-formyl-N(1)-(5-phospho-beta-D-ribosyl)glycinamide + ADP + phosphate + H(+). The protein operates within purine metabolism; IMP biosynthesis via de novo pathway; N(2)-formyl-N(1)-(5-phospho-D-ribosyl)glycinamide from N(1)-(5-phospho-D-ribosyl)glycinamide (formate route): step 1/1. Its function is as follows. Involved in the de novo purine biosynthesis. Catalyzes the transfer of formate to 5-phospho-ribosyl-glycinamide (GAR), producing 5-phospho-ribosyl-N-formylglycinamide (FGAR). Formate is provided by PurU via hydrolysis of 10-formyl-tetrahydrofolate. This chain is Formate-dependent phosphoribosylglycinamide formyltransferase, found in Nostoc sp. (strain PCC 7120 / SAG 25.82 / UTEX 2576).